The sequence spans 81 residues: Photosystem I iron-sulfur center (81 aa).

4Fe-4S ferredoxin-type domains are found at residues 2–31 (SHSV…MIPW) and 39–68 (IASA…VRVY). Residues Cys-11, Cys-14, Cys-17, Cys-21, Cys-48, Cys-51, Cys-54, and Cys-58 each coordinate [4Fe-4S] cluster.

As to quaternary structure, the eukaryotic PSI reaction center is composed of at least 11 subunits. It depends on [4Fe-4S] cluster as a cofactor.

The protein localises to the plastid. It localises to the chloroplast thylakoid membrane. The enzyme catalyses reduced [plastocyanin] + hnu + oxidized [2Fe-2S]-[ferredoxin] = oxidized [plastocyanin] + reduced [2Fe-2S]-[ferredoxin]. Its function is as follows. Apoprotein for the two 4Fe-4S centers FA and FB of photosystem I (PSI); essential for photochemical activity. FB is the terminal electron acceptor of PSI, donating electrons to ferredoxin. The C-terminus interacts with PsaA/B/D and helps assemble the protein into the PSI complex. Required for binding of PsaD and PsaE to PSI. PSI is a plastocyanin-ferredoxin oxidoreductase, converting photonic excitation into a charge separation, which transfers an electron from the donor P700 chlorophyll pair to the spectroscopically characterized acceptors A0, A1, FX, FA and FB in turn. The sequence is that of Photosystem I iron-sulfur center from Arabis hirsuta (Hairy rock-cress).